A 127-amino-acid polypeptide reads, in one-letter code: Fluoride-specific ion channel FluC (127 aa).

The next 4 helical transmembrane spans lie at 4–24, 35–55, 71–91, and 103–123; these read LLLA…LLSM, LGTL…FAWF, TGFC…VFLL, and VFVN…LFSA. Na(+) contacts are provided by glycine 75 and threonine 78.

The protein belongs to the fluoride channel Fluc/FEX (TC 1.A.43) family.

It is found in the cell inner membrane. The enzyme catalyses fluoride(in) = fluoride(out). Na(+) is not transported, but it plays an essential structural role and its presence is essential for fluoride channel function. Fluoride-specific ion channel. Important for reducing fluoride concentration in the cell, thus reducing its toxicity. This Escherichia coli (strain K12 / MC4100 / BW2952) protein is Fluoride-specific ion channel FluC.